The primary structure comprises 180 residues: Putative manganese efflux pump MntP (180 aa).

Helical transmembrane passes span 6 to 26 (VLLLAGALGTDAFSLCLGLGL), 33 to 53 (MAWMLVGLIVALHVVLPVAGW), 63 to 83 (VGRWAAYLGAAILFYLGVKMV), 101 to 121 (GFLGLTVLAGSVSMDALSVGF), and 130 to 150 (LLLTAGVIGLVAGLMSAAAFV).

This sequence belongs to the MntP (TC 9.B.29) family.

It localises to the cell membrane. Its function is as follows. Probably functions as a manganese efflux pump. The protein is Putative manganese efflux pump MntP of Desulforudis audaxviator (strain MP104C).